The following is a 438-amino-acid chain: UDP-N-acetylmuramoylalanine--D-glutamate ligase (438 aa).

112-118 serves as a coordination point for ATP; it reads GSNGKST.

This sequence belongs to the MurCDEF family.

It localises to the cytoplasm. It carries out the reaction UDP-N-acetyl-alpha-D-muramoyl-L-alanine + D-glutamate + ATP = UDP-N-acetyl-alpha-D-muramoyl-L-alanyl-D-glutamate + ADP + phosphate + H(+). It participates in cell wall biogenesis; peptidoglycan biosynthesis. Cell wall formation. Catalyzes the addition of glutamate to the nucleotide precursor UDP-N-acetylmuramoyl-L-alanine (UMA). The polypeptide is UDP-N-acetylmuramoylalanine--D-glutamate ligase (murD) (Escherichia coli O6:H1 (strain CFT073 / ATCC 700928 / UPEC)).